Here is a 275-residue protein sequence, read N- to C-terminus: Bis(5'-nucleosyl)-tetraphosphatase, symmetrical (275 aa).

This sequence belongs to the Ap4A hydrolase family.

It catalyses the reaction P(1),P(4)-bis(5'-adenosyl) tetraphosphate + H2O = 2 ADP + 2 H(+). Its function is as follows. Hydrolyzes diadenosine 5',5'''-P1,P4-tetraphosphate to yield ADP. This Pasteurella multocida (strain Pm70) protein is Bis(5'-nucleosyl)-tetraphosphatase, symmetrical (apaH).